Reading from the N-terminus, the 347-residue chain is Dihydroorotase (347 aa).

H17 and H19 together coordinate Zn(2+). Substrate is bound by residues 19 to 21 (HLR) and N45. K103, H140, and H178 together coordinate Zn(2+). An N6-carboxylysine modification is found at K103. H140 provides a ligand contact to substrate. Residue L223 participates in substrate binding. D251 is a Zn(2+) binding site. The active site involves D251. Positions 255 and 267 each coordinate substrate.

The protein belongs to the metallo-dependent hydrolases superfamily. DHOase family. Class II DHOase subfamily. In terms of assembly, homodimer. The cofactor is Zn(2+).

It carries out the reaction (S)-dihydroorotate + H2O = N-carbamoyl-L-aspartate + H(+). The protein operates within pyrimidine metabolism; UMP biosynthesis via de novo pathway; (S)-dihydroorotate from bicarbonate: step 3/3. Its function is as follows. Catalyzes the reversible cyclization of carbamoyl aspartate to dihydroorotate. This Pectobacterium atrosepticum (strain SCRI 1043 / ATCC BAA-672) (Erwinia carotovora subsp. atroseptica) protein is Dihydroorotase.